We begin with the raw amino-acid sequence, 156 residues long: Small ribosomal subunit protein uS7 (156 aa).

It belongs to the universal ribosomal protein uS7 family. As to quaternary structure, part of the 30S ribosomal subunit. Contacts proteins S9 and S11.

Its function is as follows. One of the primary rRNA binding proteins, it binds directly to 16S rRNA where it nucleates assembly of the head domain of the 30S subunit. Is located at the subunit interface close to the decoding center, probably blocks exit of the E-site tRNA. This Synechocystis sp. (strain ATCC 27184 / PCC 6803 / Kazusa) protein is Small ribosomal subunit protein uS7.